Reading from the N-terminus, the 452-residue chain is 3-phosphoshikimate 1-carboxyvinyltransferase (452 aa).

Residues 1-23 (MLNGSASKPATARKSAGLTGSVR) form a disordered region. 3-phosphoshikimate-binding residues include lysine 28, serine 29, and arginine 33. Lysine 28 lines the phosphoenolpyruvate pocket. Residues glycine 100 and arginine 128 each coordinate phosphoenolpyruvate. Residues serine 173, glutamine 175, aspartate 326, and lysine 353 each coordinate 3-phosphoshikimate. Glutamine 175 is a phosphoenolpyruvate binding site. Aspartate 326 serves as the catalytic Proton acceptor. 2 residues coordinate phosphoenolpyruvate: arginine 357 and arginine 405.

The protein belongs to the EPSP synthase family. Monomer.

Its subcellular location is the cytoplasm. It carries out the reaction 3-phosphoshikimate + phosphoenolpyruvate = 5-O-(1-carboxyvinyl)-3-phosphoshikimate + phosphate. It functions in the pathway metabolic intermediate biosynthesis; chorismate biosynthesis; chorismate from D-erythrose 4-phosphate and phosphoenolpyruvate: step 6/7. Functionally, catalyzes the transfer of the enolpyruvyl moiety of phosphoenolpyruvate (PEP) to the 5-hydroxyl of shikimate-3-phosphate (S3P) to produce enolpyruvyl shikimate-3-phosphate and inorganic phosphate. This is 3-phosphoshikimate 1-carboxyvinyltransferase from Rhizobium johnstonii (strain DSM 114642 / LMG 32736 / 3841) (Rhizobium leguminosarum bv. viciae).